The primary structure comprises 137 residues: Golgin subfamily A member 7 (137 aa).

Residues cysteine 69 and cysteine 72 are each lipidated (S-palmitoyl cysteine).

It belongs to the ERF4 family. As to quaternary structure, interacts with GOLGA3. Interacts with ZDHHC9. Palmitoylated on Cys-69 and Cys-72; which is required for Golgi localization and interaction with GOLGA3.

Its subcellular location is the golgi apparatus membrane. May be involved in protein transport from Golgi to cell surface. The ZDHHC9-GOLGA7 complex is a palmitoyltransferase specific for HRAS and NRAS. This is Golgin subfamily A member 7 (GOLGA7) from Bos taurus (Bovine).